Reading from the N-terminus, the 310-residue chain is Pantothenate kinase (310 aa).

95 to 102 (GSVAVGKS) is an ATP binding site.

This sequence belongs to the prokaryotic pantothenate kinase family.

Its subcellular location is the cytoplasm. It carries out the reaction (R)-pantothenate + ATP = (R)-4'-phosphopantothenate + ADP + H(+). The protein operates within cofactor biosynthesis; coenzyme A biosynthesis; CoA from (R)-pantothenate: step 1/5. This is Pantothenate kinase from Rhodococcus erythropolis (strain PR4 / NBRC 100887).